The chain runs to 365 residues: Peptide chain release factor 2 (365 aa).

An N5-methylglutamine modification is found at Gln252.

It belongs to the prokaryotic/mitochondrial release factor family. Post-translationally, methylated by PrmC. Methylation increases the termination efficiency of RF2.

Its subcellular location is the cytoplasm. Functionally, peptide chain release factor 2 directs the termination of translation in response to the peptide chain termination codons UGA and UAA. The polypeptide is Peptide chain release factor 2 (Shewanella woodyi (strain ATCC 51908 / MS32)).